The following is a 391-amino-acid chain: MFLKNIFIALAIALLVDASPAKRSPGFVTLDFDVIKTPVNATGQEGKVKRQAIPVTLNNEHVSYAADITIGSNKQKFNVIVDTGSSDLWVPDASVTCDKPRPGQSADFCKGKGIYTPKSSTTSQNLGTPFYIGYGDGSSSQGTLYKDTVGFGGASITKQVFADITKTSIPQGILGIGYKTNEAAGDYDNVPVTLKNQGVIAKNAYSLYLNSPNAATGQIIFGGVDKAKYSGSLIAVPVTSDRELRITLNSLKAVGKNINGNIDVLLDSGTTITYLQQDVAQDIIDAFQAELKSDGQGHTFYVTDCQTSGTVDFNFDNNAKISVPASEFTAPLSYANGQPYPKCQLLLGISDANILGDNFLRSAYLVYDLDDDKISLAQVKYTSASNIAALT.

A signal peptide spans 1–18 (MFLKNIFIALAIALLVDA). Positions 19 to 50 (SPAKRSPGFVTLDFDVIKTPVNATGQEGKVKR) are cleaved as a propeptide — activation peptide. A glycan (N-linked (GlcNAc...) asparagine) is linked at asparagine 40. The 314-residue stretch at 64–377 (YAADITIGSN…DLDDDKISLA (314 aa)) folds into the Peptidase A1 domain. The active site involves aspartate 82. Residue 82-84 (DTG) coordinates pepstatin A. The cysteines at positions 97 and 109 are disulfide-linked. 135–136 (GD) contributes to the pepstatin A binding site. Zn(2+) contacts are provided by aspartate 241 and aspartate 263. Aspartate 267 is a catalytic residue. Position 267–271 (267–271 (DSGTT)) interacts with pepstatin A. Cysteine 305 and cysteine 343 are disulfide-bonded.

This sequence belongs to the peptidase A1 family. Monomer.

It localises to the secreted. The enzyme catalyses Preferential cleavage at the carboxyl of hydrophobic amino acids, but fails to cleave 15-Leu-|-Tyr-16, 16-Tyr-|-Leu-17 and 24-Phe-|-Phe-25 of insulin B chain. Activates trypsinogen, and degrades keratin.. Inhibited by pepstatin A analogs and squash aspartic peptidase inhibitor (SQAPI). In terms of biological role, secreted aspartic peptidases (SAPs) are a group of ten acidic hydrolases considered as key virulence factors. These enzymes supply the fungus with nutrient amino acids as well as are able to degrade the selected host's proteins involved in the immune defense. Induces host inflammatory cytokine production in a proteolytic activity-independent way. Plays a role in tissue damage during superficial infection. Moreover, acts toward human hemoglobin though limited proteolysis to generate a variety of antimicrobial hemocidins, enabling to compete with the other microorganisms of the same physiological niche using the microbicidal peptides generated from the host protein. Its function is as follows. Plays a key role in defense against host by cleaving histatin-5 (Hst 5), a peptide from human saliva that carries out fungicidal activity. The cleavage rate decreases in an order of SAP2 &gt; SAP9 &gt; SAP3 &gt; SAP7 &gt; SAP4 &gt; SAP1 &gt; SAP8. The first cleavage occurs between residues 'Lys-17' and 'His-18' of Hst 5, giving DSHAKRHHGYKRKFHEK and HHSHRGY peptides. Further fragmentation by SAP1 results in AKRHHGYKRKFHEK and AKRHHGY products. This Candida albicans (strain SC5314 / ATCC MYA-2876) (Yeast) protein is Secreted aspartic protease 1.